A 746-amino-acid polypeptide reads, in one-letter code: Probable ubiquitin carboxyl-terminal hydrolase MINDY-4 (746 aa).

3 disordered regions span residues 123–179 (DDET…SEGE), 198–254 (MALG…IKGE), and 319–342 (GKGATEASPYASNEHRRRSGFSNM). Polar residues-rich tracts occupy residues 141–152 (YRSQNDLQFNKS) and 165–174 (TEAGVTSTGV). The active-site Nucleophile is the cysteine 448. Histidine 666 acts as the Proton acceptor in catalysis.

Belongs to the MINDY deubiquitinase family. FAM188 subfamily.

The enzyme catalyses Thiol-dependent hydrolysis of ester, thioester, amide, peptide and isopeptide bonds formed by the C-terminal Gly of ubiquitin (a 76-residue protein attached to proteins as an intracellular targeting signal).. In terms of biological role, probable hydrolase that can remove 'Lys-48'-linked conjugated ubiquitin from proteins. The chain is Probable ubiquitin carboxyl-terminal hydrolase MINDY-4 (mindy4) from Xenopus tropicalis (Western clawed frog).